The following is a 141-amino-acid chain: Large ribosomal subunit protein uL13 (141 aa).

It belongs to the universal ribosomal protein uL13 family. In terms of assembly, part of the 50S ribosomal subunit.

Functionally, this protein is one of the early assembly proteins of the 50S ribosomal subunit, although it is not seen to bind rRNA by itself. It is important during the early stages of 50S assembly. This Sulfurovum sp. (strain NBC37-1) protein is Large ribosomal subunit protein uL13.